The chain runs to 366 residues: MKISELMEVLNNHVPFHQAESWDNVGLLIGNDKLDITGILTTLDCTDDVVNQAIELNTNTIIAHHPLIFKGVKRIVEDGYGSIIRKLIQNNINLIALHTNLDVNPKGVNRMLADQIGLENISMINTNSSYYYKVQTFIPKNYIEDFKDSLNELGLAKEGNYEYCFFESEGKGQFKPVGDASPYIGKLDSIEYVDEIKLEFMIKGNELEITKRAILDNHPYETPVFDFIKMNKESEYGLGIIGQLNQTMTLDEFSEYAKKQLNIPSVRYTGQHDSPIKKVAIIGGSGIGFEYKASQLGADVFVTGDIKHHDALDAKIQNVNLLDINHYSEYVMKEGLKELLEKWLFKYENQFPIYASEINTDPFKYK.

Residues histidine 64, histidine 65, aspartate 102, histidine 326, and glutamate 329 each contribute to the a divalent metal cation site.

Belongs to the GTP cyclohydrolase I type 2/NIF3 family. As to quaternary structure, homohexamer.

This chain is GTP cyclohydrolase 1 type 2 homolog, found in Staphylococcus epidermidis (strain ATCC 12228 / FDA PCI 1200).